Here is a 297-residue protein sequence, read N- to C-terminus: Flavin-dependent thymidylate synthase (297 aa).

A ThyX domain is found at 41 to 251 (GFVRLVDYMG…PLTYAAFVEY (211 aa)). Residues T87, 110–112 (RHR), and E118 contribute to the FAD site. DUMP-binding positions include 107-110 (QWVR), 118-122 (EYSAR), and R190. The ThyX motif signature appears at 110–120 (RHRTANVNEYS). FAD is bound by residues 206-208 (DLH) and H212. A dUMP-binding site is contributed by R217. The active-site Involved in ionization of N3 of dUMP, leading to its activation is R217.

Belongs to the thymidylate synthase ThyX family. As to quaternary structure, homotetramer. FAD is required as a cofactor.

It catalyses the reaction dUMP + (6R)-5,10-methylene-5,6,7,8-tetrahydrofolate + NADPH + H(+) = dTMP + (6S)-5,6,7,8-tetrahydrofolate + NADP(+). The protein operates within pyrimidine metabolism; dTTP biosynthesis. In terms of biological role, catalyzes the reductive methylation of 2'-deoxyuridine-5'-monophosphate (dUMP) to 2'-deoxythymidine-5'-monophosphate (dTMP) while utilizing 5,10-methylenetetrahydrofolate (mTHF) as the methyl donor, and NADPH and FADH(2) as the reductant. In Ehrlichia ruminantium (strain Gardel), this protein is Flavin-dependent thymidylate synthase.